The chain runs to 247 residues: Neurotrophic factor BDNF precursor form (247 aa).

The N-terminal stretch at 1–18 (MTILFLTMVISYFGCMKA) is a signal peptide. A propeptide spanning residues 19-128 (APMKEANVRG…AANMSMRVRR (110 aa)) is cleaved from the precursor. Residue Asn121 is glycosylated (N-linked (GlcNAc...) asparagine). 3 cysteine pairs are disulfide-bonded: Cys141-Cys208, Cys186-Cys237, and Cys196-Cys239.

Belongs to the NGF-beta family. In terms of assembly, monomers and homodimers. Binds to NTRK2/TRKB. Can form heterodimers with other neurotrophin family members, such as NTF3 and NTF4 (in vitro), but the physiological relevance of this is not clear. BDNF precursor form: interacts with the heterodimer formed by NGFR and SORCS2. Mature BDNF has much lower affinity for the heterodimer formed by NGFR and SORCS2. In terms of processing, N-glycosylated and glycosulfated, contrary to mature BDNF. Post-translationally, mature BDNF is produced by proteolytic removal of the propeptide, catalyzed by a FURIN family member. In addition, the precursor form is proteolytically cleaved within the propeptide, but this is not an obligatory intermediate for the production of mature BDNF. Can be converted into mature BDNF by plasmin (PLG).

Its subcellular location is the secreted. Its function is as follows. Important signaling molecule that activates signaling cascades downstream of NTRK2. During development, promotes the survival and differentiation of selected neuronal populations of the peripheral and central nervous systems. Participates in axonal growth, pathfinding and in the modulation of dendritic growth and morphology. Major regulator of synaptic transmission and plasticity at adult synapses in many regions of the CNS. The versatility of BDNF is emphasized by its contribution to a range of adaptive neuronal responses including long-term potentiation (LTP), long-term depression (LTD), certain forms of short-term synaptic plasticity, as well as homeostatic regulation of intrinsic neuronal excitability. Important signaling molecule that activates signaling cascades downstream of NTRK2. Activates signaling cascades via the heterodimeric receptor formed by NGFR and SORCS2. Signaling via NGFR and SORCS2 plays a role in synaptic plasticity and long-term depression (LTD). Binding to NGFR and SORCS2 promotes neuronal apoptosis. Promotes neuronal growth cone collapse. This chain is Neurotrophic factor BDNF precursor form (BDNF), found in Ailuropoda melanoleuca (Giant panda).